We begin with the raw amino-acid sequence, 214 residues long: Nucleoplasmin-2 (214 aa).

Residues 119–214 (ERYEASDLTW…ARAKKPGFKK (96 aa)) are disordered. Positions 127–155 (TWEEEEEEEGEEEEEEEEDDEDEDADISL) are enriched in acidic residues. Residues 129 to 152 (EEEEEEEGEEEEEEEEDDEDEDAD) are acidic tract A2. The short motif at 165 to 180 (KRLVPQKQASVAKKKK) is the Bipartite nuclear localization signal element. Positions 181–197 (LEKEEEEIRASVRDKSP) are enriched in basic and acidic residues. The segment covering 198–214 (VKKAKATARAKKPGFKK) has biased composition (basic residues).

It belongs to the nucleoplasmin family. In terms of assembly, homopentamer, when bound to H2A-H2B dimers only. Homodecamer of two stacked pentamers, when bound to H2A-H2B dimers and H3-H4 tetramers simultaneously.

It localises to the nucleus. In terms of biological role, core histones chaperone involved in chromatin reprogramming, specially during fertilization and early embryonic development. Probably involved in sperm DNA decondensation during fertilization. The protein is Nucleoplasmin-2 (NPM2) of Homo sapiens (Human).